The primary structure comprises 895 residues: Ral guanine nucleotide dissociation stimulator (895 aa).

Residues 112 to 237 (KVRTVKAGTL…RAHLLLAQLE (126 aa)) enclose the N-terminal Ras-GEF domain. Residues 301-324 (SELEPALEPPLDPEPTLAPAPELD) are disordered. Pro residues predominate over residues 307–318 (LEPPLDPEPTLA). Positions 367–629 (PPDLVAEQFT…YNLSCELEPP (263 aa)) constitute a Ras-GEF domain. Disordered stretches follow at residues 650–669 (ERRQAPSTELSTSSSAHSKS) and 708–754 (VPES…STTR). Low complexity-rich tracts occupy residues 656–667 (STELSTSSSAHS) and 726–753 (SSPETSGISSASSSTSSSSASTTPVSTT). A Ras-associating domain is found at 779–866 (DCCIIRVSLD…YDFILKKRAF (88 aa)). Residue tyrosine 795 is modified to Phosphotyrosine.

As to quaternary structure, interacts with RIT1 and RIT2. Interacts with TRAF3. Interacts with HRAS. Phosphorylation of Tyr-795 by MET blocks HRAS binding. Expressed in all tissues examined.

It is found in the cytoplasm. It localises to the nucleus. Functionally, functions as a guanine nucleotide exchange factor (GEF) activating either RalA or RalB GTPases and plays an important role in intracellular transport. Interacts and acts as an effector molecule for R-Ras, H-Ras, K-Ras, and Rap. During bacterial clearance, recognizes 'Lys-33'-linked polyubiquitinated TRAF3 and subsequently mediates assembly of the exocyst complex. In Rattus norvegicus (Rat), this protein is Ral guanine nucleotide dissociation stimulator (Ralgds).